The following is a 328-amino-acid chain: Homeobox protein DLX-2 (328 aa).

Polar residues-rich tracts occupy residues 16-28 (QIAA…QHQQ) and 52-72 (ESPT…NQQH). Disordered regions lie at residues 16-81 (QIAA…GGGG), 211-270 (WKSG…SSPS), and 300-328 (LHPT…GTIF). Positions 152–211 (VRKPRTIYSSFQLAALQRRFQKTQYLALPERAELAASLGLTQTQVKIWFQNRRSKFKKMW) form a DNA-binding region, homeobox. Serine 232 is subject to Phosphoserine. A compositionally biased stretch (gly residues) spans 250-264 (AGGGGPGSGGSGAGS).

Belongs to the distal-less homeobox family. As to quaternary structure, interacts (via homeobox DNA-binding domain) with POU4F2; this interaction enhances retinal ganglion cell (RGC) differentiation.

It is found in the nucleus. In terms of biological role, acts as a transcriptional activator. Activates transcription of CGA/alpha-GSU, via binding to the downstream activin regulatory element (DARE) in the gene promoter. Plays a role in terminal differentiation of interneurons, such as amacrine and bipolar cells in the developing retina. Likely to play a regulatory role in the development of the ventral forebrain. May play a role in craniofacial patterning and morphogenesis. This Homo sapiens (Human) protein is Homeobox protein DLX-2 (DLX2).